A 116-amino-acid polypeptide reads, in one-letter code: Protein aq_1857 (116 aa).

This sequence belongs to the HesB/IscA family.

The polypeptide is Protein aq_1857 (Aquifex aeolicus (strain VF5)).